The chain runs to 356 residues: Carbamoyl phosphate synthase small chain (356 aa).

The tract at residues 1–160 (MKGYLKLEDG…TKKPYRIAGI (160 aa)) is CPSase. Positions 45, 211, and 213 each coordinate L-glutamine. The region spanning 163-350 (KLAFIDLGTK…MDIVMVYKRR (188 aa)) is the Glutamine amidotransferase type-1 domain. C238 functions as the Nucleophile in the catalytic mechanism. Residues L239, Q242, N280, G282, and Y283 each coordinate L-glutamine. Residues H323 and E325 contribute to the active site.

This sequence belongs to the CarA family. As to quaternary structure, composed of two chains; the small (or glutamine) chain promotes the hydrolysis of glutamine to ammonia, which is used by the large (or ammonia) chain to synthesize carbamoyl phosphate. Tetramer of heterodimers (alpha,beta)4.

The catalysed reaction is hydrogencarbonate + L-glutamine + 2 ATP + H2O = carbamoyl phosphate + L-glutamate + 2 ADP + phosphate + 2 H(+). It carries out the reaction L-glutamine + H2O = L-glutamate + NH4(+). It participates in amino-acid biosynthesis; L-arginine biosynthesis; carbamoyl phosphate from bicarbonate: step 1/1. It functions in the pathway pyrimidine metabolism; UMP biosynthesis via de novo pathway; (S)-dihydroorotate from bicarbonate: step 1/3. In terms of biological role, small subunit of the glutamine-dependent carbamoyl phosphate synthetase (CPSase). CPSase catalyzes the formation of carbamoyl phosphate from the ammonia moiety of glutamine, carbonate, and phosphate donated by ATP, constituting the first step of 2 biosynthetic pathways, one leading to arginine and/or urea and the other to pyrimidine nucleotides. The small subunit (glutamine amidotransferase) binds and cleaves glutamine to supply the large subunit with the substrate ammonia. This Caldanaerobacter subterraneus subsp. tengcongensis (strain DSM 15242 / JCM 11007 / NBRC 100824 / MB4) (Thermoanaerobacter tengcongensis) protein is Carbamoyl phosphate synthase small chain.